The following is a 262-amino-acid chain: Phosphate import ATP-binding protein PstB (262 aa).

Residues 16 to 257 (MEARHLSVRY…PSEQRTEDYV (242 aa)) enclose the ABC transporter domain. Residue 48–55 (GPSGCGKS) participates in ATP binding.

This sequence belongs to the ABC transporter superfamily. Phosphate importer (TC 3.A.1.7) family. The complex is composed of two ATP-binding proteins (PstB), two transmembrane proteins (PstC and PstA) and a solute-binding protein (PstS).

It localises to the cell inner membrane. The catalysed reaction is phosphate(out) + ATP + H2O = ADP + 2 phosphate(in) + H(+). In terms of biological role, part of the ABC transporter complex PstSACB involved in phosphate import. Responsible for energy coupling to the transport system. This chain is Phosphate import ATP-binding protein PstB, found in Anaeromyxobacter dehalogenans (strain 2CP-C).